A 485-amino-acid chain; its full sequence is AP2-like ethylene-responsive transcription factor TOE2 (485 aa).

Residues 124-135 are compositionally biased toward gly residues; the sequence is GDFIGSGSGGGD. Residues 124-161 are disordered; it reads GDFIGSGSGGGDASRVMQPPSQPVKKSRRGPRSKSSQY. Residues 160 to 216 constitute a DNA-binding region (AP2/ERF); sequence QYRGVTFYRRTGRWESHIWDCGKQVYLGGFDTAHAAARAYDRAAVKFRGLEADINFV.

It belongs to the AP2/ERF transcription factor family. AP2 subfamily.

The protein localises to the nucleus. Functionally, probably acts as a transcriptional activator. Binds to the GCC-box pathogenesis-related promoter element. May be involved in the regulation of gene expression by stress factors and by components of stress signal transduction pathways. Regulates negatively the transition to flowering time and confers flowering time delay. This is AP2-like ethylene-responsive transcription factor TOE2 (TOE2) from Arabidopsis thaliana (Mouse-ear cress).